Consider the following 452-residue polypeptide: Peptidoglycan DL-endopeptidase CwlO (452 aa).

The first 30 residues, 1–30 (MKKKVYTFGLASILGTASLFTPFMNNTASA), serve as a signal peptide directing secretion. Residues 28–38 (ASAETSQQKQE) show a composition bias toward polar residues. Disordered stretches follow at residues 28–53 (ASAE…IESK) and 258–317 (AAAA…GSVV). Composition is skewed to basic and acidic residues over residues 39 to 53 (IQQK…IESK) and 263 to 275 (KAKE…EKSD). The span at 276–317 (SGSSSSSNSGSVSKSDGSSNSGSSSSKKSSSPSRNYSSGSVV) shows a compositional bias: low complexity. The region spanning 321-450 (GNAIEAAIST…KAFNGVVRRV (130 aa)) is the NlpC/P60 domain. The Nucleophile role is filled by Cys-358. His-410 serves as the catalytic Proton acceptor. Asn-422 is a catalytic residue.

It belongs to the peptidase C40 family.

Its subcellular location is the secreted. Shows a cell wall hydrolytic DL-endopeptidase activity. The sequence is that of Peptidoglycan DL-endopeptidase CwlO (cwlO) from Bacillus licheniformis (strain ATCC 14580 / DSM 13 / JCM 2505 / CCUG 7422 / NBRC 12200 / NCIMB 9375 / NCTC 10341 / NRRL NRS-1264 / Gibson 46).